We begin with the raw amino-acid sequence, 347 residues long: 3-isopropylmalate dehydrogenase (347 aa).

Position 76–87 (76–87) interacts with NAD(+); that stretch reads GPKWTDPNNRPE. Substrate-binding residues include arginine 94, arginine 104, arginine 132, and aspartate 217. Residues aspartate 217, aspartate 241, and aspartate 245 each coordinate Mg(2+). Position 275-287 (275-287) interacts with NAD(+); it reads GSAPDIANEDKAN.

It belongs to the isocitrate and isopropylmalate dehydrogenases family. LeuB type 1 subfamily. Homodimer. Mg(2+) serves as cofactor. It depends on Mn(2+) as a cofactor.

It is found in the cytoplasm. The catalysed reaction is (2R,3S)-3-isopropylmalate + NAD(+) = 4-methyl-2-oxopentanoate + CO2 + NADH. Its pathway is amino-acid biosynthesis; L-leucine biosynthesis; L-leucine from 3-methyl-2-oxobutanoate: step 3/4. Catalyzes the oxidation of 3-carboxy-2-hydroxy-4-methylpentanoate (3-isopropylmalate) to 3-carboxy-4-methyl-2-oxopentanoate. The product decarboxylates to 4-methyl-2 oxopentanoate. The sequence is that of 3-isopropylmalate dehydrogenase from Staphylococcus epidermidis (strain ATCC 35984 / DSM 28319 / BCRC 17069 / CCUG 31568 / BM 3577 / RP62A).